The primary structure comprises 74 residues: High-potential iron-sulfur protein (74 aa).

Positions 36, 39, 53, and 67 each coordinate [4Fe-4S] cluster.

This sequence belongs to the high-potential iron-sulfur protein (HiPIP) family. Homodimer.

Functionally, specific class of high-redox-potential 4Fe-4S ferredoxins. Functions in anaerobic electron transport in most purple and in some other photosynthetic bacteria and in at least one genus (Paracoccus) of halophilic, denitrifying bacteria. The chain is High-potential iron-sulfur protein (hip) from Rubrivivax gelatinosus (Rhodocyclus gelatinosus).